The chain runs to 128 residues: Large ribosomal subunit protein uL22 (128 aa).

Belongs to the universal ribosomal protein uL22 family. In terms of assembly, part of the 50S ribosomal subunit.

Functionally, this protein binds specifically to 23S rRNA; its binding is stimulated by other ribosomal proteins, e.g. L4, L17, and L20. It is important during the early stages of 50S assembly. It makes multiple contacts with different domains of the 23S rRNA in the assembled 50S subunit and ribosome. Its function is as follows. The globular domain of the protein is located near the polypeptide exit tunnel on the outside of the subunit, while an extended beta-hairpin is found that lines the wall of the exit tunnel in the center of the 70S ribosome. The protein is Large ribosomal subunit protein uL22 of Prochlorococcus marinus (strain MIT 9301).